The chain runs to 292 residues: Oxidative stress-responsive serine-rich protein 1 (292 aa).

Residues 24-178 (ASGSVASLSV…ATQVPQASLK (155 aa)) are disordered. Positions 65 to 83 (STRKSSRGAVRTQRRRRSK) are enriched in basic residues. Phosphothreonine is present on residues threonine 143 and threonine 233.

This is Oxidative stress-responsive serine-rich protein 1 (OSER1) from Homo sapiens (Human).